A 194-amino-acid chain; its full sequence is Crossover junction endodeoxyribonuclease RuvC (194 aa).

Active-site residues include D7, E68, and D141. The Mg(2+) site is built by D7, E68, and D141.

It belongs to the RuvC family. Homodimer which binds Holliday junction (HJ) DNA. The HJ becomes 2-fold symmetrical on binding to RuvC with unstacked arms; it has a different conformation from HJ DNA in complex with RuvA. In the full resolvosome a probable DNA-RuvA(4)-RuvB(12)-RuvC(2) complex forms which resolves the HJ. Mg(2+) is required as a cofactor.

The protein resides in the cytoplasm. It catalyses the reaction Endonucleolytic cleavage at a junction such as a reciprocal single-stranded crossover between two homologous DNA duplexes (Holliday junction).. In terms of biological role, the RuvA-RuvB-RuvC complex processes Holliday junction (HJ) DNA during genetic recombination and DNA repair. Endonuclease that resolves HJ intermediates. Cleaves cruciform DNA by making single-stranded nicks across the HJ at symmetrical positions within the homologous arms, yielding a 5'-phosphate and a 3'-hydroxyl group; requires a central core of homology in the junction. The consensus cleavage sequence is 5'-(A/T)TT(C/G)-3'. Cleavage occurs on the 3'-side of the TT dinucleotide at the point of strand exchange. HJ branch migration catalyzed by RuvA-RuvB allows RuvC to scan DNA until it finds its consensus sequence, where it cleaves and resolves the cruciform DNA. This is Crossover junction endodeoxyribonuclease RuvC from Mycolicibacterium vanbaalenii (strain DSM 7251 / JCM 13017 / BCRC 16820 / KCTC 9966 / NRRL B-24157 / PYR-1) (Mycobacterium vanbaalenii).